A 442-amino-acid polypeptide reads, in one-letter code: Trigger factor (442 aa).

Residues 163-248 (NDLVTINYCI…ILNVEEKQEN (86 aa)) form the PPIase FKBP-type domain.

The protein belongs to the FKBP-type PPIase family. Tig subfamily.

Its subcellular location is the cytoplasm. The enzyme catalyses [protein]-peptidylproline (omega=180) = [protein]-peptidylproline (omega=0). In terms of biological role, involved in protein export. Acts as a chaperone by maintaining the newly synthesized protein in an open conformation. Functions as a peptidyl-prolyl cis-trans isomerase. In Buchnera aphidicola subsp. Schizaphis graminum (strain Sg), this protein is Trigger factor.